Reading from the N-terminus, the 269-residue chain is Tryptophan synthase alpha chain (269 aa).

Catalysis depends on proton acceptor residues Glu-49 and Asp-60.

It belongs to the TrpA family. As to quaternary structure, tetramer of two alpha and two beta chains.

It catalyses the reaction (1S,2R)-1-C-(indol-3-yl)glycerol 3-phosphate + L-serine = D-glyceraldehyde 3-phosphate + L-tryptophan + H2O. It functions in the pathway amino-acid biosynthesis; L-tryptophan biosynthesis; L-tryptophan from chorismate: step 5/5. Functionally, the alpha subunit is responsible for the aldol cleavage of indoleglycerol phosphate to indole and glyceraldehyde 3-phosphate. In Pseudomonas putida (strain W619), this protein is Tryptophan synthase alpha chain.